Consider the following 538-residue polypeptide: Lipid scramblase CLPTM1L (538 aa).

The Cytoplasmic portion of the chain corresponds to 1–9 (MFPKTSFTS). The chain crosses the membrane as a helical span at residues 10–30 (LIVGVFLLYVLHTCWVMYGIV). At 31 to 284 (YTKPCEKRRA…IKGIFVDTNL (254 aa)) the chain is on the extracellular side. Residues N90 and N100 are each glycosylated (N-linked (GlcNAc...) asparagine). The segment at 140-166 (ISLITGQDEPEKPDQQKQSSDSELDRP) is disordered. An N-linked (GlcNAc...) asparagine glycan is attached at N229. Residues 285–305 (YFLALTFFVAAFHLLFDFLAF) form a helical membrane-spanning segment. At 306–324 (KNDISFWKHKKSMVGMSSK) the chain is on the cytoplasmic side. A helical transmembrane segment spans residues 325–341 (AVLWRCFSTIVIFLYLL). The Extracellular portion of the chain corresponds to 342 to 402 (DEQTSLLVLV…TEEYDTLAMK (61 aa)). Residues 403–423 (YLSYLLYPLCVGGAVYALVFV) form a helical membrane-spanning segment. Residues 424 to 428 (KYKSW) are Cytoplasmic-facing. The helical transmembrane segment at 429–449 (YSWIINSLVNGVYAFGFLFML) threads the bilayer. Residues 450 to 538 (PQLFVNYKLK…EKPKGKSHED (89 aa)) are Extracellular-facing.

Belongs to the CLPTM1 family.

It is found in the endoplasmic reticulum membrane. The enzyme catalyses a 6-(alpha-D-glucosaminyl)-1-(1,2-diacyl-sn-glycero-3-phospho)-1D-myo-inositol(in) = a 6-(alpha-D-glucosaminyl)-1-(1,2-diacyl-sn-glycero-3-phospho)-1D-myo-inositol(out). It carries out the reaction 6-(alpha-D-glucosaminyl)-(1-octadecanoyl,2-(9Z)-octadecenoyl-sn-glycero-3-phospho)-1D-myo-inositol(in) = 6-(alpha-D-glucosaminyl)-(1-octadecanoyl,2-(9Z)-octadecenoyl-sn-glycero-3-phospho)-1D-myo-inositol(out). It catalyses the reaction a 1,2-diacyl-sn-glycero-3-phospho-(1D-myo-inositol)(in) = a 1,2-diacyl-sn-glycero-3-phospho-(1D-myo-inositol)(out). The catalysed reaction is a 1,2-diacyl-sn-glycero-3-phosphocholine(in) = a 1,2-diacyl-sn-glycero-3-phosphocholine(out). The enzyme catalyses a 1,2-diacyl-sn-glycero-3-phosphoethanolamine(in) = a 1,2-diacyl-sn-glycero-3-phosphoethanolamine(out). In terms of biological role, scramblase that mediates the translocation of glucosaminylphosphatidylinositol (alpha-D-GlcN-(1-6)-(1,2-diacyl-sn-glycero-3-phospho)-1D-myo-inositol, GlcN-PI) across the endoplasmic reticulum (ER) membrane, from the cytosolic leaflet to the luminal leaflet of the ER membrane, where it participates in the biosynthesis of glycosylphosphatidylinositol (GPI). GPI is a lipid glycoconjugate involved in post-translational modification of proteins. Can also translocate 1,2-diacyl-sn-glycero-3-phospho-(1D-myo-inositol) (phosphatidylinositol or PI), as well as several other phospholipids (1,2-diacyl-sn-glycero-3-phosphocholine, 1,2-diacyl-sn-glycero-3-phosphoethanolamine), and N-acetylglucosaminylphosphatidylinositol (GlcNAc-PI) in vitro. This is Lipid scramblase CLPTM1L (clptm1l) from Danio rerio (Zebrafish).